The following is a 125-amino-acid chain: MEVQKIWKSFLNAISKVFSKGKKLRCTCFPKRKKEASERSCFPFLDTETISSCDLSDDVLSPKLFAKNSYRCSLKETKCIDVIVSHNSLAPQFTEIRYTDGISAKAENTDEMTMHIALAPLTENQ.

The protein resides in the golgi apparatus. In terms of biological role, has a role in meiosis. The sequence is that of Meiotically up-regulated gene 112 protein (mug112) from Schizosaccharomyces pombe (strain 972 / ATCC 24843) (Fission yeast).